We begin with the raw amino-acid sequence, 1014 residues long: Probable LRR receptor-like serine/threonine-protein kinase At1g07650 (1014 aa).

The first 23 residues, 1-23 (MIYLHRIYFIIVLFTLIFHGRLG), serve as a signal peptide directing secretion. Residues 24 to 619 (FSDNNKLHEA…KPPVYYDTKD (596 aa)) lie on the Extracellular side of the membrane. N-linked (GlcNAc...) asparagine glycans are attached at residues Asn-76, Asn-87, and Asn-101. LRR repeat units follow at residues 89 to 112 (SCHV…EFSK), 113 to 137 (LRHL…WASM), 139 to 160 (LEDL…LTRL), 161 to 184 (TMLR…IGQL), 186 to 207 (HLEK…KLGL), 208 to 234 (LKNL…NWTR), 256 to 279 (LTSL…PLKN), 280 to 304 (LESI…IGDL), 305 to 327 (KKLK…SFEN), 329 to 352 (KKAD…FVER), and 354 to 376 (KNVD…DCNR). N-linked (GlcNAc...) asparagine glycosylation occurs at Asn-165. N-linked (GlcNAc...) asparagine glycans are attached at residues Asn-210, Asn-220, and Asn-231. 5 N-linked (GlcNAc...) asparagine glycosylation sites follow: Asn-362, Asn-389, Asn-474, Asn-481, and Asn-511. An LRR 12 repeat occupies 516–539 (LHFAEIIFTDDNTLYSLGKRLFDI). Asn-570 is a glycosylation site (N-linked (GlcNAc...) asparagine). The helical transmembrane segment at 620–640 (IILKVGVPVAAATLLLFIIVG) threads the bilayer. Over 641 to 1014 (VFWKKRRDKN…DAEEKTGLLD (374 aa)) the chain is Cytoplasmic. Thr-667 is subject to Phosphothreonine. The region spanning 678-960 (FDVTRKIGEG…EGKTAMQELL (283 aa)) is the Protein kinase domain. ATP contacts are provided by residues 684-692 (IGEGGFGSV) and Lys-706. Position 751 is a phosphotyrosine (Tyr-751). Asp-805 (proton acceptor) is an active-site residue. A phosphoserine mark is found at Ser-809 and Ser-838. Thr-839 and Thr-844 each carry phosphothreonine. At Tyr-852 the chain carries Phosphotyrosine. The residue at position 989 (Ser-989) is a Phosphoserine. Residues 989 to 1002 (SFSTSGPRTASANS) show a composition bias toward polar residues. The tract at residues 989–1014 (SFSTSGPRTASANSLVDAEEKTGLLD) is disordered.

The protein belongs to the protein kinase superfamily. Ser/Thr protein kinase family.

It is found in the membrane. It carries out the reaction L-seryl-[protein] + ATP = O-phospho-L-seryl-[protein] + ADP + H(+). The catalysed reaction is L-threonyl-[protein] + ATP = O-phospho-L-threonyl-[protein] + ADP + H(+). This Arabidopsis thaliana (Mouse-ear cress) protein is Probable LRR receptor-like serine/threonine-protein kinase At1g07650.